The following is a 460-amino-acid chain: DNA repair protein RAD57 (460 aa).

Position 125–132 (125–132 (GESSTGKS)) interacts with ATP.

The protein belongs to the RecA family.

It is found in the nucleus. In terms of biological role, participates in the repair of X-ray-induced damage to DNA and in meiosis. It may act in part by stabilizing a repair complex of other RAD genes. This chain is DNA repair protein RAD57 (RAD57), found in Saccharomyces cerevisiae (strain ATCC 204508 / S288c) (Baker's yeast).